We begin with the raw amino-acid sequence, 367 residues long: NADH-quinone oxidoreductase subunit D (367 aa).

The protein belongs to the complex I 49 kDa subunit family. As to quaternary structure, NDH-1 is composed of 14 different subunits. Subunits NuoB, C, D, E, F, and G constitute the peripheral sector of the complex.

It localises to the cell membrane. The enzyme catalyses a quinone + NADH + 5 H(+)(in) = a quinol + NAD(+) + 4 H(+)(out). NDH-1 shuttles electrons from NADH, via FMN and iron-sulfur (Fe-S) centers, to quinones in the respiratory chain. The immediate electron acceptor for the enzyme in this species is believed to be ubiquinone. Couples the redox reaction to proton translocation (for every two electrons transferred, four hydrogen ions are translocated across the cytoplasmic membrane), and thus conserves the redox energy in a proton gradient. This chain is NADH-quinone oxidoreductase subunit D, found in Dehalococcoides mccartyi (strain CBDB1).